A 1525-amino-acid polypeptide reads, in one-letter code: MLSSFCGDGHPFSTGLPNVSICAQHTVLVWVPAAFFLLTLPFLSAQCHLTAQRFARLPFSAHFIIKLLLVAFLAANSLATWCYVLFSKNSYAAAYYVYPGLWVLVWTGTFLVHLIRLRCGLVSSGIQHVTSLIFLLCGAPEFYQWIRMENSNSFPNDLTTTDSAQFLSIAYLSWYSALILYTFSLCFADPRGAKTDDEKASSKSAASPELQSSFLNRLTLWWFNSIPWTGARRDLEIDDIFELNERSGTEFLSELWESFWEPKRLKYIHDTSIWAKKDPSEQEKDPVVIPSVVSSLFMMFRWEFLLASTLKFVSDTMQFASPFLLHELLNFISAKNAPFWKGMALSILMFSVSELRSLILNGYFYIMFRMGTKIQTSLTAAVYKKTLLISNSARRDRTVGEIVNLMAIDVERFQMITPQIQQFWSCPYQITFALVYLFITLGYSALPGVVIMVIFVPMNIISSMIVRKWQIEQMKLKDERTKMVNEVLNGIKVVKLYAWEVPMEAYIDEIRTKELALIKKSAMVRNILDSFNTASPFLVALFSFGTFVLSNPSHLLTPQIAFVSLALFNQLRSPMTMIALLINQAVQAVVSNKRLKEFLVAEELDEKCVDRSVNIERSHNAVRVENLTASWDPEEAAGEKTLQDVDLTAPRNSLIAVVGKVGSGKSSLLQALLGEMGKLRGRIGVNGRVAYVPQQPWIQNMTLRDNITFGRPFDRKRYDQVLYACALKADIKILPAGDQTEIGEKGINLSGGQKARVSLARAVYQNLDVYLLDDPLSAVDAHVGRHIFEKVIGPNGLLREKTRILVTHGLTYTKMADEILVMLEGKIEESGTFEHLIKRRGLFFDFMEEYKSGSDNSSEAGGSQDDDFEAIGGEIQDYMNPEDVVLTVTNDLDETIRTPELTTQISTMSSPEKPPTGTSPAAATESQNKLIKKEGIAQGKVEIATYQLYVKAAGYLLSIAFIGFFIVYMTLQILRSFWLSAWSDEYDPDSPSAHPMAKGWRLGVYGALGFSETACFFVALLALVFVGQRASKNLHGPLIHNLMRSPMSFYDTTPLGRILNRCAKDIETIDMMLPMNFRYLVMCVLQVAFTLIVIIISTPLFAVVILPLALIYLIFLRYYVPTSRQLKRLESVHRSPIYSHFGETIQGAASIRAFGKVDEFRQDSGRILDTFIRCRYSSLVSNRWLAVRLEFVGNCIIFFAALFAVLSKEFGWITSPGVIGVSVSYALNITEVLNFAVRQVSEIEANIVSVERVNEYTNTPNEAPWRIEGREPAPGWPSRGVVKFDGYSTRYREGLDLVLHDISADVAAGEKIGIVGRTGAGKSSFALALFRMIEAAGGRIVIDDVEVSQIGLHDLRSNITIIPQDPVLFSGTLRFNLDPFFTYSDDQIWRALELAHLKHFAAGLPDGLLYKISEAGENLSVGQRQLVALARALLRHTRVLVLDEATAAVDVATDALIQETIREEFKECTVFTIAHRLNTIMDYDRIMVLDKGSILEFDTPDALMADKNSAFAKMVADAAEQDKHE.

The Extracellular portion of the chain corresponds to 1–24; the sequence is MLSSFCGDGHPFSTGLPNVSICAQ. Asparagine 18 carries N-linked (GlcNAc...) asparagine glycosylation. Residues 25–45 form a helical membrane-spanning segment; the sequence is HTVLVWVPAAFFLLTLPFLSA. Over 46 to 66 the chain is Cytoplasmic; sequence QCHLTAQRFARLPFSAHFIIK. The helical transmembrane segment at 67-87 threads the bilayer; that stretch reads LLLVAFLAANSLATWCYVLFS. Residues 88-94 are Extracellular-facing; the sequence is KNSYAAA. A helical transmembrane segment spans residues 95–115; the sequence is YYVYPGLWVLVWTGTFLVHLI. Over 116–118 the chain is Cytoplasmic; it reads RLR. The chain crosses the membrane as a helical span at residues 119–139; the sequence is CGLVSSGIQHVTSLIFLLCGA. Over 140-165 the chain is Extracellular; the sequence is PEFYQWIRMENSNSFPNDLTTTDSAQ. The chain crosses the membrane as a helical span at residues 166–186; the sequence is FLSIAYLSWYSALILYTFSLC. The Cytoplasmic segment spans residues 187-346; it reads FADPRGAKTD…APFWKGMALS (160 aa). Residues 305–587 enclose the ABC transmembrane type-1 1 domain; sequence LLASTLKFVS…IALLINQAVQ (283 aa). Residues 347-367 form a helical membrane-spanning segment; that stretch reads ILMFSVSELRSLILNGYFYIM. Residues 368–434 lie on the Extracellular side of the membrane; sequence FRMGTKIQTS…SCPYQITFAL (67 aa). The helical transmembrane segment at 435–455 threads the bilayer; sequence VYLFITLGYSALPGVVIMVIF. Residues 456–535 lie on the Cytoplasmic side of the membrane; that stretch reads VPMNIISSMI…NILDSFNTAS (80 aa). A helical membrane pass occupies residues 536-556; sequence PFLVALFSFGTFVLSNPSHLL. Over 557-561 the chain is Extracellular; that stretch reads TPQIA. A helical transmembrane segment spans residues 562 to 582; that stretch reads FVSLALFNQLRSPMTMIALLI. Residues 583 to 953 are Cytoplasmic-facing; it reads NQAVQAVVSN…ATYQLYVKAA (371 aa). Positions 622–849 constitute an ABC transporter 1 domain; it reads VRVENLTASW…RGLFFDFMEE (228 aa). 659–666 lines the ATP pocket; sequence GKVGSGKS. The disordered stretch occupies residues 900–925; the sequence is ELTTQISTMSSPEKPPTGTSPAAATE. Residues 954–974 form a helical membrane-spanning segment; it reads GYLLSIAFIGFFIVYMTLQIL. The 287-residue stretch at 959-1245 folds into the ABC transmembrane type-1 2 domain; sequence IAFIGFFIVY…AVRQVSEIEA (287 aa). The Extracellular portion of the chain corresponds to 975 to 1005; the sequence is RSFWLSAWSDEYDPDSPSAHPMAKGWRLGVY. Residues 1006–1026 traverse the membrane as a helical segment; that stretch reads GALGFSETACFFVALLALVFV. Over 1027–1068 the chain is Cytoplasmic; sequence GQRASKNLHGPLIHNLMRSPMSFYDTTPLGRILNRCAKDIET. Residues 1069–1089 traverse the membrane as a helical segment; sequence IDMMLPMNFRYLVMCVLQVAF. A topological domain (extracellular) is located at residue threonine 1090. A helical membrane pass occupies residues 1091 to 1111; that stretch reads LIVIIISTPLFAVVILPLALI. Residues 1112–1184 lie on the Cytoplasmic side of the membrane; sequence YLIFLRYYVP…RYSSLVSNRW (73 aa). A helical transmembrane segment spans residues 1185–1205; it reads LAVRLEFVGNCIIFFAALFAV. The Extracellular segment spans residues 1206 to 1525; that stretch reads LSKEFGWITS…ADAAEQDKHE (320 aa). Asparagine 1228 is a glycosylation site (N-linked (GlcNAc...) asparagine). An ABC transporter 2 domain is found at 1282 to 1516; it reads VKFDGYSTRY…KNSAFAKMVA (235 aa). 1316-1323 lines the ATP pocket; the sequence is GRTGAGKS. 2 N-linked (GlcNAc...) asparagine glycosylation sites follow: asparagine 1358 and asparagine 1418.

It belongs to the ABC transporter superfamily. ABCC family. Conjugate transporter (TC 3.A.1.208) subfamily. In terms of tissue distribution, expressed in head neurons, including the dopamine (DA) motor neuron, and other cells in the body.

The protein localises to the cell membrane. In terms of biological role, negatively regulates cellular toxicity by mediating the export of environmental toxicants such as methylmercury out of the cell. Plays a role in inhibiting methylmercury-induced dopamine (DA) motor neuron degeneration. Not involved in Mn(2+)- or Al(3+)-associated toxicity. The sequence is that of Multidrug resistance protein mrp-7 from Caenorhabditis elegans.